The sequence spans 548 residues: Probable 2,3-bisphosphoglycerate-independent phosphoglycerate mutase (548 aa).

2 residues coordinate Mn(2+): Asp20 and Ser73. Catalysis depends on Ser73, which acts as the Phosphoserine intermediate. Residues His134, 164-165 (RD), Arg200, Arg207, 279-282 (RGDR), and Lys354 each bind substrate. Mn(2+) contacts are provided by Asp422, His426, Asp463, His464, and His493.

It belongs to the BPG-independent phosphoglycerate mutase family. As to quaternary structure, monomer. Requires Mn(2+) as cofactor.

It catalyses the reaction (2R)-2-phosphoglycerate = (2R)-3-phosphoglycerate. The protein operates within carbohydrate degradation; glycolysis; pyruvate from D-glyceraldehyde 3-phosphate: step 3/5. In terms of biological role, catalyzes the interconversion of 2-phosphoglycerate and 3-phosphoglycerate. The chain is Probable 2,3-bisphosphoglycerate-independent phosphoglycerate mutase (gpmI) from Leptospira interrogans serogroup Icterohaemorrhagiae serovar copenhageni (strain Fiocruz L1-130).